A 413-amino-acid polypeptide reads, in one-letter code: MLRILLINSDKPEPIQFFQKDKETNDSINISVITRSCYAPLYSHWADHVYIVDDVTDLTVMKSLMLEILKVGPFDHIVSTTEKSILTGGFLRSYFGIAGPGFETALYMTNKLAMKTKLKMEGIPVADFLCVSQVEDIPAAGEKLGWPIIVKPALGSGALNTFIIHSLDHYEDLYSTSGGLGELKKNNSLMIAEKCIEMEEFHCDTLYADGEILFVSISKYTVPLLKGMAKIQGSFILSQNDPVYAEILELQKSVAQAFRITDGPGHLEIYRTHSGELIVGEIAMRIGGGGISRMIEKKFNISLWESSLNISVYRDPNLTVNPIEGTVGYFSLPCRNGTIKEFTPIEEWEKLAGILEVELLYQEGDVVDEKQSSSFDLARLYFCLENENEVQHLLALVKQTYYLHLTEDHMMNQ.

Positions 115–312 constitute an ATP-grasp domain; it reads KTKLKMEGIP…LWESSLNISV (198 aa). 141-202 is a binding site for ATP; that stretch reads GEKLGWPIIV…EKCIEMEEFH (62 aa). Mg(2+) contacts are provided by Glu-268 and Glu-281. Positions 268 and 281 each coordinate Mn(2+).

As to quaternary structure, homodimer. It depends on Mg(2+) as a cofactor. Mn(2+) serves as cofactor. The cofactor is Co(2+).

It catalyses the reaction an L-alpha-amino acid + L-arginine + ATP = L-arginyl-L-alpha-amino acid + ADP + phosphate + H(+). Functionally, catalyzes the synthesis of Arg-Xaa dipeptides in an ATP-dependent manner. Has strict specificity toward arginine as the N-terminal substrate. The chain is L-arginine-specific L-amino acid ligase from Bacillus subtilis.